A 96-amino-acid polypeptide reads, in one-letter code: Large ribosomal subunit protein bL21 (96 aa).

The segment covering 73 to 84 has biased composition (basic residues); sequence KRRKRYQSRNGH. Positions 73-96 are disordered; it reads KRRKRYQSRNGHRQQMTQIEVVSL. Residues 85–96 are compositionally biased toward polar residues; the sequence is RQQMTQIEVVSL.

This sequence belongs to the bacterial ribosomal protein bL21 family. As to quaternary structure, part of the 50S ribosomal subunit. Contacts protein L20.

Its function is as follows. This protein binds to 23S rRNA in the presence of protein L20. In Chlorobium phaeovibrioides (strain DSM 265 / 1930) (Prosthecochloris vibrioformis (strain DSM 265)), this protein is Large ribosomal subunit protein bL21.